A 138-amino-acid polypeptide reads, in one-letter code: Brain natriuretic peptide (138 aa).

The signal sequence occupies residues 1–22; the sequence is MRLSSMWLCSLLLILKLQLSST. Disordered stretches follow at residues 50-84 and 99-138; these read EQMAVDQSAPGQRDLLDSLSTEDAGDGPQPDAGLD and SVRNDSSRRSSGCFGRRMDRIGSMSSLGCNTVGRYNPKQR. A disulfide bridge links Cys111 with Cys127.

This sequence belongs to the natriuretic peptide family.

The protein resides in the secreted. In terms of biological role, cardiac hormone which may function as a paracrine antifibrotic factor in the heart. Also plays a key role in cardiovascular homeostasis through natriuresis, diuresis, vasorelaxation, and inhibition of renin and aldosterone secretion. The chain is Brain natriuretic peptide (nppb) from Oreochromis mossambicus (Mozambique tilapia).